Here is a 188-residue protein sequence, read N- to C-terminus: Peptidyl-tRNA hydrolase (188 aa).

F15 lines the tRNA pocket. The Proton acceptor role is filled by H20. Y64, N66, and N112 together coordinate tRNA.

The protein belongs to the PTH family. Monomer.

It is found in the cytoplasm. The enzyme catalyses an N-acyl-L-alpha-aminoacyl-tRNA + H2O = an N-acyl-L-amino acid + a tRNA + H(+). Functionally, hydrolyzes ribosome-free peptidyl-tRNAs (with 1 or more amino acids incorporated), which drop off the ribosome during protein synthesis, or as a result of ribosome stalling. Catalyzes the release of premature peptidyl moieties from peptidyl-tRNA molecules trapped in stalled 50S ribosomal subunits, and thus maintains levels of free tRNAs and 50S ribosomes. The sequence is that of Peptidyl-tRNA hydrolase from Borrelia recurrentis (strain A1).